The primary structure comprises 652 residues: Translation factor guf1, mitochondrial (652 aa).

Residues 1–44 (MSIFRLSRTFSLETCLKSSSFKIRWRFFSVSYASRKLASEDNKP) constitute a mitochondrion transit peptide. Residues 56-237 (NRVRNWAVIA…EIIQKIPPPK (182 aa)) form the tr-type G domain. Residues 65 to 72 (AHIDHGKS), 130 to 134 (DTPGH), and 184 to 187 (NKVD) contribute to the GTP site.

It belongs to the TRAFAC class translation factor GTPase superfamily. Classic translation factor GTPase family. LepA subfamily.

Its subcellular location is the mitochondrion inner membrane. It catalyses the reaction GTP + H2O = GDP + phosphate + H(+). In terms of biological role, promotes mitochondrial protein synthesis. May act as a fidelity factor of the translation reaction, by catalyzing a one-codon backward translocation of tRNAs on improperly translocated ribosomes. Binds to mitochondrial ribosomes in a GTP-dependent manner. In Schizosaccharomyces pombe (strain 972 / ATCC 24843) (Fission yeast), this protein is Translation factor guf1, mitochondrial (guf1).